Consider the following 856-residue polypeptide: Leucine--tRNA ligase (856 aa).

The short motif at 53-63 (PYPSGNLHMGH) is the 'HIGH' region element. Positions 622 to 626 (KMSKS) match the 'KMSKS' region motif. Lys-625 provides a ligand contact to ATP.

This sequence belongs to the class-I aminoacyl-tRNA synthetase family.

The protein resides in the cytoplasm. It carries out the reaction tRNA(Leu) + L-leucine + ATP = L-leucyl-tRNA(Leu) + AMP + diphosphate. The protein is Leucine--tRNA ligase of Prochlorococcus marinus (strain MIT 9301).